A 397-amino-acid chain; its full sequence is ATP phosphoribosyltransferase regulatory subunit (397 aa).

It belongs to the class-II aminoacyl-tRNA synthetase family. HisZ subfamily. As to quaternary structure, heteromultimer composed of HisG and HisZ subunits.

The protein resides in the cytoplasm. It participates in amino-acid biosynthesis; L-histidine biosynthesis; L-histidine from 5-phospho-alpha-D-ribose 1-diphosphate: step 1/9. Functionally, required for the first step of histidine biosynthesis. May allow the feedback regulation of ATP phosphoribosyltransferase activity by histidine. The polypeptide is ATP phosphoribosyltransferase regulatory subunit (Halalkalibacterium halodurans (strain ATCC BAA-125 / DSM 18197 / FERM 7344 / JCM 9153 / C-125) (Bacillus halodurans)).